The following is a 181-amino-acid chain: Probable calcium-binding protein CML43 (181 aa).

3 EF-hand domains span residues 24 to 59 (LNAL…LGLD), 107 to 142 (SPES…LGLP), and 145 to 180 (GEIE…VVVP). Residues D37, N39, D41, E48, D120, D122, D124, E131, D158, N160, D162, R164, and E169 each coordinate Ca(2+).

As to expression, expressed specifically in roots.

Its function is as follows. Calcium-binding protein that may mediate calcium-dependent signal during plant defense response. The chain is Probable calcium-binding protein CML43 (CML43) from Arabidopsis thaliana (Mouse-ear cress).